We begin with the raw amino-acid sequence, 65 residues long: YYEAPPDGRHLLLQPAPAAPAVAPAAPASWPHQQRRQALDEFAAAAAAAADAQFQDEEEDGGRRV.

The span at 17 to 28 (PAAPAVAPAAPA) shows a compositional bias: low complexity. A disordered region spans residues 17–36 (PAAPAVAPAAPASWPHQQRR).

In terms of assembly, monomer.

Neurohormone that anticipates ovarian maturation. Acts as a true gonadotropin and stimulates vitellogenin biosynthesis. The sequence is that of Ovary maturating parsin from Locusta migratoria (Migratory locust).